Here is a 103-residue protein sequence, read N- to C-terminus: Large ribosomal subunit protein uL24 (103 aa).

The protein belongs to the universal ribosomal protein uL24 family. In terms of assembly, part of the 50S ribosomal subunit.

Functionally, one of two assembly initiator proteins, it binds directly to the 5'-end of the 23S rRNA, where it nucleates assembly of the 50S subunit. In terms of biological role, one of the proteins that surrounds the polypeptide exit tunnel on the outside of the subunit. The polypeptide is Large ribosomal subunit protein uL24 (Histophilus somni (strain 129Pt) (Haemophilus somnus)).